The following is a 279-amino-acid chain: Putative pyruvate, phosphate dikinase regulatory protein (279 aa).

Residue 153–160 (GVSRTSKT) participates in ADP binding.

It belongs to the pyruvate, phosphate/water dikinase regulatory protein family. PDRP subfamily.

The catalysed reaction is N(tele)-phospho-L-histidyl/L-threonyl-[pyruvate, phosphate dikinase] + ADP = N(tele)-phospho-L-histidyl/O-phospho-L-threonyl-[pyruvate, phosphate dikinase] + AMP + H(+). It catalyses the reaction N(tele)-phospho-L-histidyl/O-phospho-L-threonyl-[pyruvate, phosphate dikinase] + phosphate + H(+) = N(tele)-phospho-L-histidyl/L-threonyl-[pyruvate, phosphate dikinase] + diphosphate. In terms of biological role, bifunctional serine/threonine kinase and phosphorylase involved in the regulation of the pyruvate, phosphate dikinase (PPDK) by catalyzing its phosphorylation/dephosphorylation. This chain is Putative pyruvate, phosphate dikinase regulatory protein, found in Bradyrhizobium sp. (strain ORS 278).